We begin with the raw amino-acid sequence, 360 residues long: Histidinol-phosphate aminotransferase (360 aa).

The residue at position 218 (lysine 218) is an N6-(pyridoxal phosphate)lysine.

It belongs to the class-II pyridoxal-phosphate-dependent aminotransferase family. Histidinol-phosphate aminotransferase subfamily. In terms of assembly, homodimer. The cofactor is pyridoxal 5'-phosphate.

The catalysed reaction is L-histidinol phosphate + 2-oxoglutarate = 3-(imidazol-4-yl)-2-oxopropyl phosphate + L-glutamate. It participates in amino-acid biosynthesis; L-histidine biosynthesis; L-histidine from 5-phospho-alpha-D-ribose 1-diphosphate: step 7/9. The sequence is that of Histidinol-phosphate aminotransferase from Chlorobium phaeovibrioides (strain DSM 265 / 1930) (Prosthecochloris vibrioformis (strain DSM 265)).